Consider the following 578-residue polypeptide: Membrane protein insertase YidC (578 aa).

Residues Ile-3–Trp-23 traverse the membrane as a helical segment. Residues Ala-34–Asp-72 form a disordered region. Over residues Ala-37–Ala-66 the composition is skewed to polar residues. 5 helical membrane-spanning segments follow: residues Leu-361–Leu-381, Leu-387–Phe-407, Leu-457–Leu-477, Pro-500–Pro-520, and Pro-535–Val-555.

The protein belongs to the OXA1/ALB3/YidC family. Type 1 subfamily. As to quaternary structure, interacts with the Sec translocase complex via SecD. Specifically interacts with transmembrane segments of nascent integral membrane proteins during membrane integration.

Its subcellular location is the cell inner membrane. Functionally, required for the insertion and/or proper folding and/or complex formation of integral membrane proteins into the membrane. Involved in integration of membrane proteins that insert both dependently and independently of the Sec translocase complex, as well as at least some lipoproteins. Aids folding of multispanning membrane proteins. This is Membrane protein insertase YidC from Pseudomonas aeruginosa (strain ATCC 15692 / DSM 22644 / CIP 104116 / JCM 14847 / LMG 12228 / 1C / PRS 101 / PAO1).